The chain runs to 191 residues: Adenine phosphoribosyltransferase 5 (191 aa).

The protein belongs to the purine/pyrimidine phosphoribosyltransferase family. As to quaternary structure, homodimer.

Its subcellular location is the cytoplasm. The enzyme catalyses AMP + diphosphate = 5-phospho-alpha-D-ribose 1-diphosphate + adenine. It functions in the pathway purine metabolism; AMP biosynthesis via salvage pathway; AMP from adenine: step 1/1. Its function is as follows. Catalyzes a salvage reaction resulting in the formation of AMP, that is energically less costly than de novo synthesis. May contribute to the recycling of adenine into adenylate nucleotides and the inactivation of cytokinins by phosphoribosylation. Possesses low activity toward adenine, but can efficiently convert cytokinins from free bases (active form) to the corresponding nucleotides (inactive form). This is Adenine phosphoribosyltransferase 5 (APT5) from Arabidopsis thaliana (Mouse-ear cress).